Reading from the N-terminus, the 485-residue chain is Zinc finger protein 639 (485 aa).

The segment covering 1 to 14 has biased composition (basic residues); that stretch reads MSEYPKKRKRKTLH. Disordered regions lie at residues 1–23 and 54–82; these read MSEY…DSSG and DNKD…SRSQ. Position 60 is a phosphoserine (serine 60). Lysine 76 participates in a covalent cross-link: Glycyl lysine isopeptide (Lys-Gly) (interchain with G-Cter in SUMO2). A Phosphoserine modification is found at serine 88. Residues lysine 177, lysine 181, and lysine 226 each participate in a glycyl lysine isopeptide (Lys-Gly) (interchain with G-Cter in SUMO2) cross-link. C2H2-type zinc fingers lie at residues 204 to 227, 233 to 255, 260 to 283, 289 to 311, 374 to 397, 403 to 425, 431 to 454, and 460 to 482; these read YKCE…ILKH, NVCR…AKLH, YICK…ADTH, YWCE…FQEH, FVCQ…AIEH, HVCD…LNSH, YLCQ…DFKH, and HKCS…LPVH. Residues 371-455 form an interaction with CTNNA2 region; it reads KNFFVCQVCG…LKIHLDFKHS (85 aa).

The protein belongs to the krueppel C2H2-type zinc-finger protein family. Interacts with CTNNA2.

The protein resides in the nucleus. Functionally, binds DNA and may function as a transcriptional repressor. The protein is Zinc finger protein 639 (Znf639) of Rattus norvegicus (Rat).